The following is a 214-amino-acid chain: Large ribosomal subunit protein bL25 (214 aa).

The tract at residues 187–214 is disordered; it reads AEVAPSIEETVEPEVIKKGKKAEEEEEK. A compositionally biased stretch (basic and acidic residues) spans 200–214; that stretch reads EVIKKGKKAEEEEEK.

The protein belongs to the bacterial ribosomal protein bL25 family. CTC subfamily. As to quaternary structure, part of the 50S ribosomal subunit; part of the 5S rRNA/L5/L18/L25 subcomplex. Contacts the 5S rRNA. Binds to the 5S rRNA independently of L5 and L18.

Its function is as follows. This is one of the proteins that binds to the 5S RNA in the ribosome where it forms part of the central protuberance. This is Large ribosomal subunit protein bL25 from Thermodesulfovibrio yellowstonii (strain ATCC 51303 / DSM 11347 / YP87).